The primary structure comprises 741 residues: Methionine--tRNA ligase (741 aa).

The short motif at 11–21 (PYANGPIHAGH) is the 'HIGH' region element. The Zn(2+) site is built by Cys-143, Cys-146, Cys-156, and Cys-159. Positions 345–349 (KFSTS) match the 'KMSKS' region motif. Residue Thr-348 participates in ATP binding. Positions 641 to 741 (EFAKLDLRVG…KEVKLGARIR (101 aa)) constitute a tRNA-binding domain.

This sequence belongs to the class-I aminoacyl-tRNA synthetase family. MetG type 1 subfamily. Homodimer. It depends on Zn(2+) as a cofactor.

Its subcellular location is the cytoplasm. It catalyses the reaction tRNA(Met) + L-methionine + ATP = L-methionyl-tRNA(Met) + AMP + diphosphate. Functionally, is required not only for elongation of protein synthesis but also for the initiation of all mRNA translation through initiator tRNA(fMet) aminoacylation. The chain is Methionine--tRNA ligase from Thermococcus kodakarensis (strain ATCC BAA-918 / JCM 12380 / KOD1) (Pyrococcus kodakaraensis (strain KOD1)).